A 156-amino-acid polypeptide reads, in one-letter code: Small ribosomal subunit protein uS7 (156 aa).

The protein belongs to the universal ribosomal protein uS7 family. In terms of assembly, part of the 30S ribosomal subunit. Contacts proteins S9 and S11.

Its function is as follows. One of the primary rRNA binding proteins, it binds directly to 16S rRNA where it nucleates assembly of the head domain of the 30S subunit. Is located at the subunit interface close to the decoding center, probably blocks exit of the E-site tRNA. The protein is Small ribosomal subunit protein uS7 of Nitratidesulfovibrio vulgaris (strain DSM 19637 / Miyazaki F) (Desulfovibrio vulgaris).